A 180-amino-acid polypeptide reads, in one-letter code: MLRLFLSHLLGVWLLLSLRARKIPAQEEVLKACGREFVRLQIRICGSLSWGKSSQQHREPRQAPAALPEIVSSSITSGAEALNGMLEYIPDLPQELKATLSEREPSFRELQPSLKDSNLNLEEVEKSILGRQNEAEDQSLSQLGRSRLDAHSRIKRSDYIRYSDRCCNVGCTRKELADLC.

Positions 1–25 are cleaved as a signal peptide; it reads MLRLFLSHLLGVWLLLSLRARKIPA. 3 disulfide bridges follow: cysteine 33–cysteine 167, cysteine 45–cysteine 180, and cysteine 166–cysteine 171. Residues 53 to 154 constitute a propeptide, connecting peptide; sequence SSQQHREPRQ…RSRLDAHSRI (102 aa).

It belongs to the insulin family. Heterodimer of a B chain and an A chain linked by two disulfide bonds. As to expression, expressed by the placenta. Exclusively detected in cells located in the lamellar placental labyrinth and absent from other placental and non-placental uterine parts.

It localises to the secreted. Its function is as follows. Relaxin is an ovarian hormone that acts with estrogen to produce dilatation of the birth canal in many mammals. In Felis catus (Cat), this protein is Prorelaxin (RLN).